We begin with the raw amino-acid sequence, 212 residues long: Fibroblast growth factor 8b (212 aa).

An N-terminal signal peptide occupies residues 1–27; it reads MRLKSSRLGYLFLQFMTLCFYTQMTMQ. A glycan (N-linked (GlcNAc...) asparagine) is linked at N139.

This sequence belongs to the heparin-binding growth factors family.

It is found in the secreted. Its function is as follows. May act as signaling molecule during development of the midbrain-hindbrain boundary (MHB) organizer, and be involved in patterning of the nervous system. This Danio rerio (Zebrafish) protein is Fibroblast growth factor 8b (fgf8b).